The chain runs to 366 residues: Peptide chain release factor 2 (366 aa).

Gln253 carries the post-translational modification N5-methylglutamine.

It belongs to the prokaryotic/mitochondrial release factor family. Post-translationally, methylated by PrmC. Methylation increases the termination efficiency of RF2.

The protein resides in the cytoplasm. Functionally, peptide chain release factor 2 directs the termination of translation in response to the peptide chain termination codons UGA and UAA. The sequence is that of Peptide chain release factor 2 from Yersinia pestis.